The chain runs to 792 residues: 5-methyltetrahydropteroyltriglutamate--homocysteine methyltransferase (792 aa).

Residues Arg-16 to Lys-19 and Lys-112 each bind 5-methyltetrahydropteroyltri-L-glutamate. L-homocysteine is bound by residues Ile-432 to Ser-434 and Glu-485. Residues Ile-432–Ser-434 and Glu-485 contribute to the L-methionine site. Residues Arg-516–Cys-517 and Trp-562 each bind 5-methyltetrahydropteroyltri-L-glutamate. Asp-600 is a binding site for L-homocysteine. Position 600 (Asp-600) interacts with L-methionine. Glu-606 provides a ligand contact to 5-methyltetrahydropteroyltri-L-glutamate. His-642, Cys-644, and Glu-666 together coordinate Zn(2+). His-695 acts as the Proton donor in catalysis. Cys-727 is a binding site for Zn(2+).

It belongs to the vitamin-B12 independent methionine synthase family. The cofactor is Zn(2+).

It carries out the reaction 5-methyltetrahydropteroyltri-L-glutamate + L-homocysteine = tetrahydropteroyltri-L-glutamate + L-methionine. Its pathway is amino-acid biosynthesis; L-methionine biosynthesis via de novo pathway; L-methionine from L-homocysteine (MetE route): step 1/1. Catalyzes the transfer of a methyl group from 5-methyltetrahydrofolate to homocysteine resulting in methionine formation. The polypeptide is 5-methyltetrahydropteroyltriglutamate--homocysteine methyltransferase (Cupriavidus necator (Alcaligenes eutrophus)).